Reading from the N-terminus, the 144-residue chain is Maximins 5/H4 type 3 (144 aa).

The signal sequence occupies residues 1-18 (MNFKYIVAVSFLIASAYA). Propeptides lie at residues 19–43 (RSVQNDEQSLSQRDVLEEESLREIR) and 74–123 (TAED…KEKR). At L143 the chain carries Leucine amide.

This sequence belongs to the bombinin family. Expressed by the skin glands.

The protein resides in the secreted. Maximin-5 shows antibacterial activity against both Gram-positive and Gram-negative bacteria. The only exception is the resistance of E.coli. Also shows antimicrobial activity against fungi C.albicans, A.flavus and P.uticale. It has little hemolytic activity. It does not possess a significant cytotoxicity against tumor cell lines. It does not possess a significant anti-HIV activity. In terms of biological role, maximin-H4 shows antibacterial activity against both Gram-positive and Gram-negative bacteria. It also shows antimicrobial activity against the fungus C.albicans. Shows strong hemolytic activity. The polypeptide is Maximins 5/H4 type 3 (Bombina maxima (Giant fire-bellied toad)).